The sequence spans 101 residues: Urease subunit beta (101 aa).

Belongs to the urease beta subunit family. Heterotrimer of UreA (gamma), UreB (beta) and UreC (alpha) subunits. Three heterotrimers associate to form the active enzyme.

The protein resides in the cytoplasm. The enzyme catalyses urea + 2 H2O + H(+) = hydrogencarbonate + 2 NH4(+). It functions in the pathway nitrogen metabolism; urea degradation; CO(2) and NH(3) from urea (urease route): step 1/1. In Jannaschia sp. (strain CCS1), this protein is Urease subunit beta.